A 364-amino-acid chain; its full sequence is GTPase Obg (364 aa).

The Obg domain occupies 1–159 (MKFLDEAKVY…KTIWLHLKLI (159 aa)). The OBG-type G domain occupies 160–327 (ADAGLVGLPN…VLRALRDIIV (168 aa)). GTP contacts are provided by residues 166-173 (GLPNAGKS), 191-195 (FTTLH), 212-215 (DIPG), 279-282 (SQID), and 308-310 (SAV). Positions 173 and 193 each coordinate Mg(2+). Positions 333 to 364 (EKPAKVPKLRHRDMVVTDEGEDKGGDEGDDQP) are disordered.

This sequence belongs to the TRAFAC class OBG-HflX-like GTPase superfamily. OBG GTPase family. In terms of assembly, monomer. It depends on Mg(2+) as a cofactor.

It localises to the cytoplasm. In terms of biological role, an essential GTPase which binds GTP, GDP and possibly (p)ppGpp with moderate affinity, with high nucleotide exchange rates and a fairly low GTP hydrolysis rate. Plays a role in control of the cell cycle, stress response, ribosome biogenesis and in those bacteria that undergo differentiation, in morphogenesis control. The sequence is that of GTPase Obg from Rhizobium johnstonii (strain DSM 114642 / LMG 32736 / 3841) (Rhizobium leguminosarum bv. viciae).